The chain runs to 111 residues: COX assembly mitochondrial protein (111 aa).

The 44-residue stretch at 39–82 folds into the CHCH domain; it reads YKKCANFVQAMADCAKANGMKVFPTCDKQRDEMKSCLLFYQTDE. 2 consecutive short sequence motifs (cx9C motif) follow at residues 42 to 52 and 64 to 74; these read CANFVQAMADC and CDKQRDEMKSC. 2 disulfides stabilise this stretch: C42–C74 and C52–C64.

The protein belongs to the CMC family.

The protein localises to the mitochondrion inner membrane. Its function is as follows. Required for mitochondrial cytochrome c oxidase (COX) assembly and respiration. Binds copper. May be involved in copper trafficking and distribution to mitochondrial COX and SOD1. This is COX assembly mitochondrial protein (CMC1) from Saccharomyces cerevisiae (strain YJM789) (Baker's yeast).